We begin with the raw amino-acid sequence, 326 residues long: Ketol-acid reductoisomerase (NADP(+)) (326 aa).

The KARI N-terminal Rossmann domain maps to 1-180 (MDIIHDNAAD…GLTRGGVLEC (180 aa)). NADP(+)-binding positions include 24–27 (YGAQ), arginine 47, and serine 51. Histidine 106 is an active-site residue. Glycine 132 is a binding site for NADP(+). The 146-residue stretch at 181–326 (TMAQETYEDL…AKIRSLFERN (146 aa)) folds into the KARI C-terminal knotted domain. Mg(2+) contacts are provided by aspartate 189, glutamate 193, glutamate 225, and glutamate 229. Serine 250 lines the substrate pocket.

The protein belongs to the ketol-acid reductoisomerase family. Requires Mg(2+) as cofactor.

The enzyme catalyses (2R)-2,3-dihydroxy-3-methylbutanoate + NADP(+) = (2S)-2-acetolactate + NADPH + H(+). It carries out the reaction (2R,3R)-2,3-dihydroxy-3-methylpentanoate + NADP(+) = (S)-2-ethyl-2-hydroxy-3-oxobutanoate + NADPH + H(+). Its pathway is amino-acid biosynthesis; L-isoleucine biosynthesis; L-isoleucine from 2-oxobutanoate: step 2/4. The protein operates within amino-acid biosynthesis; L-valine biosynthesis; L-valine from pyruvate: step 2/4. Involved in the biosynthesis of branched-chain amino acids (BCAA). Catalyzes an alkyl-migration followed by a ketol-acid reduction of (S)-2-acetolactate (S2AL) to yield (R)-2,3-dihydroxy-isovalerate. In the isomerase reaction, S2AL is rearranged via a Mg-dependent methyl migration to produce 3-hydroxy-3-methyl-2-ketobutyrate (HMKB). In the reductase reaction, this 2-ketoacid undergoes a metal-dependent reduction by NADPH to yield (R)-2,3-dihydroxy-isovalerate. The chain is Ketol-acid reductoisomerase (NADP(+)) from Akkermansia muciniphila (strain ATCC BAA-835 / DSM 22959 / JCM 33894 / BCRC 81048 / CCUG 64013 / CIP 107961 / Muc).